The primary structure comprises 430 residues: Adenylosuccinate synthetase (430 aa).

GTP contacts are provided by residues 12–18 (GDEGKGK) and 40–42 (GHT). Asp-13 serves as the catalytic Proton acceptor. Mg(2+) is bound by residues Asp-13 and Gly-40. IMP contacts are provided by residues 13–16 (DEGK), 38–41 (NAGH), Thr-128, Arg-142, Gln-223, Thr-238, and Arg-302. His-41 (proton donor) is an active-site residue. Residue 298–304 (TTTGRPR) coordinates substrate. GTP contacts are provided by residues Arg-304, 330-332 (LLD), and 412-414 (SVG).

This sequence belongs to the adenylosuccinate synthetase family. As to quaternary structure, homodimer. The cofactor is Mg(2+).

It localises to the cytoplasm. It carries out the reaction IMP + L-aspartate + GTP = N(6)-(1,2-dicarboxyethyl)-AMP + GDP + phosphate + 2 H(+). It functions in the pathway purine metabolism; AMP biosynthesis via de novo pathway; AMP from IMP: step 1/2. In terms of biological role, plays an important role in the de novo pathway of purine nucleotide biosynthesis. Catalyzes the first committed step in the biosynthesis of AMP from IMP. This Listeria monocytogenes serotype 4b (strain CLIP80459) protein is Adenylosuccinate synthetase.